The following is a 271-amino-acid chain: Dihydropteroate synthase type-2 (271 aa).

One can recognise a Pterin-binding domain in the interval 1–259; that stretch reads MNKSLIIFGI…EPRPLRDGLA (259 aa). Asparagine 12 contacts 4-aminobenzoate. Positions 12, 18, 51, and 52 each coordinate diphosphate. Mg(2+) is bound at residue asparagine 12. 7,8-dihydropteroate contacts are provided by serine 52, aspartate 85, asparagine 104, aspartate 174, phenylalanine 179, lysine 213, and serine 214. Aspartate 85, asparagine 104, and aspartate 174 together coordinate (7,8-dihydropterin-6-yl)methyl diphosphate. 2 residues coordinate 6-hydroxymethyl-7,8-dihydropterin: asparagine 104 and aspartate 174. Residue lysine 213 participates in (7,8-dihydropterin-6-yl)methyl diphosphate binding. Lysine 213 lines the 6-hydroxymethyl-7,8-dihydropterin pocket. 4-aminobenzoate is bound at residue arginine 247. Residues arginine 247 and histidine 249 each contribute to the diphosphate site. 247–249 provides a ligand contact to (7,8-dihydropterin-6-yl)methyl diphosphate; it reads RTH.

This sequence belongs to the DHPS family. As to quaternary structure, homodimer. Mg(2+) is required as a cofactor.

It carries out the reaction (7,8-dihydropterin-6-yl)methyl diphosphate + 4-aminobenzoate = 7,8-dihydropteroate + diphosphate. It functions in the pathway cofactor biosynthesis; tetrahydrofolate biosynthesis; 7,8-dihydrofolate from 2-amino-4-hydroxy-6-hydroxymethyl-7,8-dihydropteridine diphosphate and 4-aminobenzoate: step 1/2. Its function is as follows. Catalyzes the condensation of para-aminobenzoate (pABA) with 6-hydroxymethyl-7,8-dihydropterin diphosphate (DHPt-PP) to form 7,8-dihydropteroate (H2Pte), the immediate precursor of folate derivatives. Confers resistance to sulfonamide antibiotics, including sulfamethoxazole (SMX), sulfadiazine and sulfisoxazole. The type II enzyme is stable whereas type I DHPS loses its activity rapidly. The sequence is that of Dihydropteroate synthase type-2 from Escherichia coli.